Consider the following 470-residue polypeptide: Nuclear receptor ROR-beta (470 aa).

Positions 18 to 93 form a DNA-binding region, nuclear receptor; the sequence is VIPCKICGDK…LGMSRDAVKF (76 aa). 2 consecutive NR C4-type zinc fingers follow at residues 21-41 and 57-81; these read CKIC…CEGC and CPRQ…LQKC. Basic and acidic residues predominate over residues 104–117; sequence LYAEVQKHQQRLQE. The segment at 104–127 is disordered; sequence LYAEVQKHQQRLQEQRQQQSGEAE. Residues 222–460 form the NR LBD domain; the sequence is EIDRIAQNII…TLFPPLYKEL (239 aa). The short motif at 456–461 is the AF-2 element; sequence LYKELF.

This sequence belongs to the nuclear hormone receptor family. NR1 subfamily. In terms of assembly, monomer. Interacts with CRX. In terms of tissue distribution, isoform 2 expressed with circadian rhythm in eye and pineal gland. Isoform 1 expressed in retina cortex, thalamus, and hypothalamus.

The protein localises to the nucleus. It is found in the nucleoplasm. Its function is as follows. Nuclear receptor that binds DNA as a monomer to ROR response elements (RORE) containing a single core motif half-site 5'-AGGTCA-3' preceded by a short A-T-rich sequence. Considered to have intrinsic transcriptional activity, have some natural ligands such as all-trans retinoic acid (ATRA) and other retinoids which act as inverse agonists repressing the transcriptional activity. Required for normal postnatal development of rod and cone photoreceptor cells. Modulates rod photoreceptors differentiation at least by inducing the transcription factor NRL-mediated pathway. In cone photoreceptor cells, regulates transcription of OPN1SW. Involved in the regulation of the period length and stability of the circadian rhythm. May control cytoarchitectural patterning of neocortical neurons during development. May act in a dose-dependent manner to regulate barrel formation upon innervation of layer IV neurons by thalamocortical axons. May play a role in the suppression of osteoblastic differentiation through the inhibition of RUNX2 transcriptional activity. In terms of biological role, critical for hindlimb motor control and for the differentiation of amacrine and horizontal cells in the retina. Regulates the expression of PTF1A synergistically with FOXN4. The protein is Nuclear receptor ROR-beta (Rorb) of Rattus norvegicus (Rat).